A 123-amino-acid polypeptide reads, in one-letter code: Small ribosomal subunit protein uS12 (123 aa).

At D89 the chain carries 3-methylthioaspartic acid. Residues T104–K123 are disordered. A compositionally biased stretch (basic residues) spans A113–K123.

It belongs to the universal ribosomal protein uS12 family. Part of the 30S ribosomal subunit. Contacts proteins S8 and S17. May interact with IF1 in the 30S initiation complex.

Functionally, with S4 and S5 plays an important role in translational accuracy. In terms of biological role, interacts with and stabilizes bases of the 16S rRNA that are involved in tRNA selection in the A site and with the mRNA backbone. Located at the interface of the 30S and 50S subunits, it traverses the body of the 30S subunit contacting proteins on the other side and probably holding the rRNA structure together. The combined cluster of proteins S8, S12 and S17 appears to hold together the shoulder and platform of the 30S subunit. This is Small ribosomal subunit protein uS12 from Neisseria meningitidis serogroup C (strain 053442).